A 483-amino-acid chain; its full sequence is NADH-quinone oxidoreductase subunit N (483 aa).

A run of 13 helical transmembrane segments spans residues 9–29 (LVLP…WGAF), 35–55 (PLFT…AVVG), 69–89 (AAAT…IVLG), 104–124 (AVLV…GDLI), 158–178 (FVLG…IYGF), 201–221 (VGLL…VSAA), 234–254 (APTS…MMMF), 272–292 (VLII…LAQT), 297–317 (LWAY…ATGG), 325–345 (LLFM…LQAL), 368–388 (IAVA…FSGF), 404–424 (VLLQ…AFYY), and 449–469 (AVGF…LIWL).

Belongs to the complex I subunit 2 family. NDH-1 is composed of 14 different subunits. Subunits NuoA, H, J, K, L, M, N constitute the membrane sector of the complex.

It is found in the cell inner membrane. It carries out the reaction a quinone + NADH + 5 H(+)(in) = a quinol + NAD(+) + 4 H(+)(out). Functionally, NDH-1 shuttles electrons from NADH, via FMN and iron-sulfur (Fe-S) centers, to quinones in the respiratory chain. The immediate electron acceptor for the enzyme in this species is believed to be ubiquinone. Couples the redox reaction to proton translocation (for every two electrons transferred, four hydrogen ions are translocated across the cytoplasmic membrane), and thus conserves the redox energy in a proton gradient. The polypeptide is NADH-quinone oxidoreductase subunit N (Caulobacter sp. (strain K31)).